A 235-amino-acid polypeptide reads, in one-letter code: NAD(P)H-quinone oxidoreductase subunit K (235 aa).

[4Fe-4S] cluster contacts are provided by cysteine 52, cysteine 53, cysteine 117, and cysteine 148. Residues 216–226 (AGAAVAPQLPV) are compositionally biased toward low complexity. The tract at residues 216–235 (AGAAVAPQLPVTEKEGRDRA) is disordered.

This sequence belongs to the complex I 20 kDa subunit family. In terms of assembly, NDH-1 can be composed of about 15 different subunits; different subcomplexes with different compositions have been identified which probably have different functions. The cofactor is [4Fe-4S] cluster.

It localises to the cellular thylakoid membrane. The enzyme catalyses a plastoquinone + NADH + (n+1) H(+)(in) = a plastoquinol + NAD(+) + n H(+)(out). It catalyses the reaction a plastoquinone + NADPH + (n+1) H(+)(in) = a plastoquinol + NADP(+) + n H(+)(out). Its function is as follows. NDH-1 shuttles electrons from an unknown electron donor, via FMN and iron-sulfur (Fe-S) centers, to quinones in the respiratory and/or the photosynthetic chain. The immediate electron acceptor for the enzyme in this species is believed to be plastoquinone. Couples the redox reaction to proton translocation, and thus conserves the redox energy in a proton gradient. Cyanobacterial NDH-1 also plays a role in inorganic carbon-concentration. The sequence is that of NAD(P)H-quinone oxidoreductase subunit K from Synechococcus elongatus (strain ATCC 33912 / PCC 7942 / FACHB-805) (Anacystis nidulans R2).